Here is a 377-residue protein sequence, read N- to C-terminus: UPF0754 membrane protein GK0639 (377 aa).

The next 2 membrane-spanning stretches (helical) occupy residues 7-27 (LLFM…IAIV) and 357-377 (YLGA…GLWL).

The protein belongs to the UPF0754 family.

It is found in the cell membrane. The sequence is that of UPF0754 membrane protein GK0639 from Geobacillus kaustophilus (strain HTA426).